Here is a 98-residue protein sequence, read N- to C-terminus: Feather beta keratin (98 aa).

The residue at position 2 (Ser-2) is an N-acetylserine.

It belongs to the avian keratin family. In terms of assembly, the avian keratins (F-ker, S-ker, C-ker and B-ker) are a complex mixture of very similar polypeptides.

The protein is Feather beta keratin of Mycteria americana (Wood stork).